The following is a 119-amino-acid chain: Beta-2-microglobulin (119 aa).

Residues 1-20 form the signal peptide; sequence MARFVAVALLVLLSLSGLET. In terms of domain architecture, Ig-like C1-type spans 25 to 114; the sequence is PKIQVYSRHP…VTFSTPKTVK (90 aa). A disulfide bond links Cys45 and Cys100.

Belongs to the beta-2-microglobulin family. As to quaternary structure, heterodimer of an alpha chain and a beta chain. Beta-2-microglobulin is the beta-chain of major histocompatibility complex class I molecules.

It localises to the secreted. Its function is as follows. Component of the class I major histocompatibility complex (MHC). Involved in the presentation of peptide antigens to the immune system. This Callicebus personatus personatus (Masked titi) protein is Beta-2-microglobulin (B2M).